Reading from the N-terminus, the 300-residue chain is Protein orai (300 aa).

Over 1–128 (MPRSHDPSRV…SKAQLKASSR (128 aa)) the chain is Cytoplasmic. A disordered region spans residues 58 to 82 (QPPSSGGGSRNVGGGDGAAGNSKNG). Over residues 62–75 (SGGGSRNVGGGDGA) the composition is skewed to gly residues. The helical transmembrane segment at 129 to 146 (TSALLAGFAMVCLVELQY) threads the bilayer. At 147–153 (DDSTSKP) the chain is on the extracellular side. The helical transmembrane segment at 154 to 174 (LLIVLGVVTSLLVSVHLLALM) threads the bilayer. Topologically, residues 175 to 205 (MSTCILPYMEATGCTQDSPHLKLKFYIDLSW) are cytoplasmic. A helical membrane pass occupies residues 206–226 (LFSTCIGLLLFLVEIGVIFYV). The Extracellular segment spans residues 227-237 (KFTAVGYPTAG). Residues 238-258 (YITTAMLIPVGIVFVLFSYLI) traverse the membrane as a helical segment. The Cytoplasmic segment spans residues 259–300 (HKNRVSHSLGRFKDKVDTMKQFLDVEANLQKSTIAPSTIRDI).

It belongs to the Orai family.

It localises to the membrane. Its function is as follows. Ca(2+) release-activated Ca(2+)-like (CRAC-like) channel subunit which mediates Ca(2+) influx and increase in Ca(2+)-selective current by synergy with the Ca(2+) sensor, stim-1. Required for Ca(2+) and IP3-dependent contractile activity of sheath cells and the spermatheca. Affects brood size and somatic cell function. This Caenorhabditis briggsae protein is Protein orai (orai-1).